We begin with the raw amino-acid sequence, 572 residues long: Proline--tRNA ligase (572 aa).

Belongs to the class-II aminoacyl-tRNA synthetase family. ProS type 1 subfamily. Homodimer.

The protein resides in the cytoplasm. It catalyses the reaction tRNA(Pro) + L-proline + ATP = L-prolyl-tRNA(Pro) + AMP + diphosphate. Catalyzes the attachment of proline to tRNA(Pro) in a two-step reaction: proline is first activated by ATP to form Pro-AMP and then transferred to the acceptor end of tRNA(Pro). As ProRS can inadvertently accommodate and process non-cognate amino acids such as alanine and cysteine, to avoid such errors it has two additional distinct editing activities against alanine. One activity is designated as 'pretransfer' editing and involves the tRNA(Pro)-independent hydrolysis of activated Ala-AMP. The other activity is designated 'posttransfer' editing and involves deacylation of mischarged Ala-tRNA(Pro). The misacylated Cys-tRNA(Pro) is not edited by ProRS. This chain is Proline--tRNA ligase, found in Haemophilus influenzae (strain PittEE).